A 48-amino-acid chain; its full sequence is Delta-ctenitoxin-Pn1b (48 aa).

Disulfide bonds link C1/C15, C8/C21, C12/C48, C14/C31, and C23/C29.

This sequence belongs to the neurotoxin 03 (Tx2) family. 05 subfamily. As to expression, expressed by the venom gland.

It localises to the secreted. Functionally, insecticidal neurotoxin that reversibly inhibits the N-methyl-D-aspartate (NMDA)-subtype of ionotropic glutamate receptor (GRIN) and inhibits inactivation of insect sodium channels (Nav). Inhibits glutamate uptake in rat brain synaptosomes. In vivo, induces immediate excitatory effects when injected intrathoracically in houseflies and cockroaches. The chain is Delta-ctenitoxin-Pn1b from Phoneutria nigriventer (Brazilian armed spider).